We begin with the raw amino-acid sequence, 653 residues long: Rab11 family-interacting protein 5 (653 aa).

A C2 domain is found at 5 to 146 (RGAEPAAGPS…AGRAQHTQWY (142 aa)). Phosphoserine occurs at positions 176, 283, 286, 307, 357, and 367. The interval 269–300 (GPGAELLTRSPSRSSWLSTEGGRDSAQSPKLF) is disordered. Residues 277 to 286 (RSPSRSSWLS) are compositionally biased toward polar residues. Disordered stretches follow at residues 342-402 (HIYN…AVLG) and 415-548 (PGAS…RSSL). Over residues 357–368 (SISGSLPSSGSL) the composition is skewed to low complexity. Residues 375–387 (FSEEGPRSTDDTW) show a composition bias toward basic and acidic residues. Residues Ser391 and Ser395 each carry the phosphoserine modification. 2 stretches are compositionally biased toward basic and acidic residues: residues 420–430 (PGEEEGARLPE) and 447–460 (VAEK…ERKP). Residues Ser494, Ser538, Ser547, and Ser553 each carry the phosphoserine modification. The FIP-RBD domain maps to 586-648 (KDSAVLDQSA…ETSPTLLQIP (63 aa)).

In terms of assembly, interacts with RAB11FIP4. Interacts with NAPG. Interacts with RO60. Interacts with RAB11A that has been activated by GTP binding. (Microbial infection) Interacts with Kaposi's sarcoma-associated herpesvirus/HHV-8 protein ORF45; this interaction results in the lysosomal degradation of ORF45 and the inhibition of viral particle release. Phosphorylated on serine and threonine residues. Phosphorylation at Ser-357 is PKA-dependent. Detected at low levels in heart, brain, placenta, lung, liver, adipocytes, kidney, spleen, skeletal muscle and pancreas.

The protein resides in the cytoplasm. It is found in the recycling endosome membrane. Its subcellular location is the early endosome membrane. The protein localises to the golgi apparatus membrane. It localises to the cytoplasmic vesicle. The protein resides in the secretory vesicle membrane. It is found in the mitochondrion membrane. Its function is as follows. Rab effector involved in protein trafficking from apical recycling endosomes to the apical plasma membrane. Involved in insulin granule exocytosis. May regulate V-ATPase intracellular transport in response to extracellular acidosis. The sequence is that of Rab11 family-interacting protein 5 from Homo sapiens (Human).